The following is a 173-amino-acid chain: Putative metal-dependent hydrolase OB0413 (173 aa).

Zn(2+)-binding residues include His-64, His-155, and His-159.

Belongs to the metal hydrolase YfiT family. Homodimer. It depends on Zn(2+) as a cofactor.

It localises to the cytoplasm. Possible metal-dependent hydrolase. This is Putative metal-dependent hydrolase OB0413 from Oceanobacillus iheyensis (strain DSM 14371 / CIP 107618 / JCM 11309 / KCTC 3954 / HTE831).